Consider the following 1235-residue polypeptide: Ubiquitin carboxyl-terminal hydrolase 40 (1235 aa).

The USP domain occupies 41–482; it reads SGIRNQGGTC…SAYMLFYRKS (442 aa). The active-site Nucleophile is cysteine 50. The Proton acceptor role is filled by histidine 305. Over residues 1180-1190 the composition is skewed to basic and acidic residues; the sequence is IRDDTGKEKQK. The disordered stretch occupies residues 1180-1235; the sequence is IRDDTGKEKQKQRALGRRKSQEALHEQSSYILSSAETPARPRAPETSLSIHVGSFR. Polar residues predominate over residues 1205–1215; the sequence is EQSSYILSSAE.

The protein belongs to the peptidase C19 family. As to expression, broadly expressed.

The catalysed reaction is Thiol-dependent hydrolysis of ester, thioester, amide, peptide and isopeptide bonds formed by the C-terminal Gly of ubiquitin (a 76-residue protein attached to proteins as an intracellular targeting signal).. In terms of biological role, may be catalytically inactive. This is Ubiquitin carboxyl-terminal hydrolase 40 (USP40) from Homo sapiens (Human).